Here is a 374-residue protein sequence, read N- to C-terminus: Large ribosomal subunit protein uL4 (374 aa).

The interval 336-355 (EKAMAKGMQNKKNREARHAA) is disordered.

Belongs to the universal ribosomal protein uL4 family.

This Trypanosoma brucei brucei protein is Large ribosomal subunit protein uL4 (RPL4).